Consider the following 780-residue polypeptide: ATPase family gene 2 protein (780 aa).

Over residues 1–23 the composition is skewed to low complexity; the sequence is MAPKSSSSGSKKKSSASSNSADA. The segment at 1-26 is disordered; the sequence is MAPKSSSSGSKKKSSASSNSADAKAS. Residues 286-293 and 557-564 each bind ATP; these read GPPGTGKT and GPPGCSKT.

This sequence belongs to the AAA ATPase family. AFG2 subfamily. In terms of assembly, homohexamer; ATP binding induces oligomerization. Forms a ring-shaped particle of about 12 nm diameter, that displays 6-fold radial symmetry. Associates with cytoplasmic pre-60S ribosomal particles containing ARX1, ALB1, RLP24 and NOG1. Binds to pre-60S ribosomal particles soon after their export from the nucleus and is released before REI1 and LSG1 are incorporated into the particles. Hexameric form interacts with RLP24 (via C-terminal); the interaction recruits AFG2 to pre-60S ribosomal particles and promotes AFG2 ATPase activity and RLP24 release from pre-60S ribosomal particles. Interacts (via N-terminus) with nucleoporin NUP116 (via N-terminus); the interaction is required for RLP24 release from pre-60S ribosomal particles.

Its subcellular location is the cytoplasm. The catalysed reaction is ATP + H2O = ADP + phosphate + H(+). The hexamer is activated by RLP24 during pre-60S ribosomal particle maturation; RLP24 activates ATPase activity of both ATP-binding regions and increases cooperativity between AFG2 subunits. The second ATP-binding region is inhibited by diazaborine; the inhibition requires prior ATP binding specifically to the second ATP-binding region. In terms of biological role, ATP-dependent chaperone which uses the energy provided by ATP hydrolysis to generate mechanical force to disassemble protein complexes. Plays an essential role in the cytoplasmic maturation steps of pre-60S ribosomal particles by promoting the release of shuttling protein RLP24 from the pre-ribosomal particles. This step facilitates the subsequent release of other shuttling proteins such as NOG1 and allows the transition of the pre-ribosomal particles to later maturation forms that bind REI1. Essential for viability. The polypeptide is ATPase family gene 2 protein (Saccharomyces cerevisiae (strain ATCC 204508 / S288c) (Baker's yeast)).